Consider the following 130-residue polypeptide: Cyclin-dependent kinase 4 inhibitor B (130 aa).

ANK repeat units lie at residues 5 to 34, 38 to 66, 71 to 100, and 104 to 130; these read SSDAGLATAAARGQVETVRQLLEAGADPNA, FGRRPIQVMMMGSAQVAELLLLHGAEPNC, TLTRPVHDAAREGFLDTLVVLHRAGARLDV, and WGRLPVDLAEEQGHRDIARYLHAATGD. T12 is subject to Phosphothreonine.

Belongs to the CDKN2 cyclin-dependent kinase inhibitor family. In terms of assembly, heterodimer of CDKN2B with CDK4 or CDK6. As to expression, expressed ubiquitously.

Interacts strongly with CDK4 and CDK6. Potent inhibitor. Potential effector of TGF-beta induced cell cycle arrest. This Mus musculus (Mouse) protein is Cyclin-dependent kinase 4 inhibitor B (Cdkn2b).